A 1639-amino-acid polypeptide reads, in one-letter code: RIMS-binding protein 3A (1639 aa).

Disordered regions lie at residues 1–22 (MAKD…SSPA), 215–240 (GSPD…CHAP), and 295–364 (SLDS…LTPS). Residues 21 to 143 (PAAAVLENQR…ELQRQLAEEL (123 aa)) adopt a coiled-coil conformation. Residues 326-339 (SPPPSPLPPPPPPS) show a composition bias toward pro residues. Coiled coils occupy residues 409 to 442 (QADE…QETN) and 480 to 619 (LAKD…AEEN). The segment at 697-811 (CRPGHPPEQP…DRDTASEVDD (115 aa)) is disordered. Composition is skewed to polar residues over residues 707 to 718 (WETSQMPESQVK) and 761 to 775 (SVPQ…SQPL). The span at 776–790 (SKKTSSQSNSSSEGS) shows a compositional bias: low complexity. Positions 832–899 (PKLKIFMAQY…PSNFVEQIPD (68 aa)) constitute an SH3 1 domain. 2 consecutive Fibronectin type-III domains span residues 995–1083 (APMQ…TLLA) and 1088–1184 (PPLD…IPED). 2 disordered regions span residues 1251-1273 (PRRQ…GAGS) and 1292-1330 (QKSP…FIHL). The span at 1293–1305 (KSPQNHRPPSVSD) shows a compositional bias: polar residues. 2 consecutive SH3 domains span residues 1452–1520 (TPAR…EMEV) and 1569–1636 (WTPK…HMSL).

Belongs to the RIMBP family. In terms of assembly, interacts with LRGUK (via guanylate kinase-like domain). Interacts (via C-terminus) with HOOK1 (via coiled-coil region).

It is found in the cytoplasm. Its subcellular location is the cytoskeleton. In terms of biological role, probable component of the manchette, a microtubule-based structure which plays a key role in sperm head morphogenesis during late stages of sperm development. This chain is RIMS-binding protein 3A (RIMBP3), found in Homo sapiens (Human).